We begin with the raw amino-acid sequence, 500 residues long: ATP synthase subunit alpha (500 aa).

169–176 (GDRQTGKT) provides a ligand contact to ATP.

Belongs to the ATPase alpha/beta chains family. In terms of assembly, F-type ATPases have 2 components, CF(1) - the catalytic core - and CF(0) - the membrane proton channel. CF(1) has five subunits: alpha(3), beta(3), gamma(1), delta(1), epsilon(1). CF(0) has three main subunits: a(1), b(2) and c(9-12). The alpha and beta chains form an alternating ring which encloses part of the gamma chain. CF(1) is attached to CF(0) by a central stalk formed by the gamma and epsilon chains, while a peripheral stalk is formed by the delta and b chains.

The protein resides in the cell membrane. It carries out the reaction ATP + H2O + 4 H(+)(in) = ADP + phosphate + 5 H(+)(out). Produces ATP from ADP in the presence of a proton gradient across the membrane. The alpha chain is a regulatory subunit. This is ATP synthase subunit alpha from Clostridioides difficile (strain 630) (Peptoclostridium difficile).